We begin with the raw amino-acid sequence, 153 residues long: MTHPLVPPITDLAIPVAEQLGLEVVGIVFHTNQRPPVLRVDIRNPQQDTGLDDCERMSRALEAALDATEIIPDAYVLEVSSPGISRQLVTDREFISFKGFPVIVSTSPPHEGQQEWIGQLIRRDETKVYINQKGRVIEIPRSLITRVLLHDGE.

The protein belongs to the RimP family.

It is found in the cytoplasm. Functionally, required for maturation of 30S ribosomal subunits. This is Ribosome maturation factor RimP from Trichormus variabilis (strain ATCC 29413 / PCC 7937) (Anabaena variabilis).